A 303-amino-acid polypeptide reads, in one-letter code: Aspartate carbamoyltransferase catalytic subunit (303 aa).

Positions 54 and 55 each coordinate carbamoyl phosphate. Lys83 contributes to the L-aspartate binding site. Positions 104, 132, and 135 each coordinate carbamoyl phosphate. The L-aspartate site is built by Arg164 and Arg226. 2 residues coordinate carbamoyl phosphate: Leu265 and Pro266.

The protein belongs to the aspartate/ornithine carbamoyltransferase superfamily. ATCase family. Heterooligomer of catalytic and regulatory chains.

It carries out the reaction carbamoyl phosphate + L-aspartate = N-carbamoyl-L-aspartate + phosphate + H(+). Its pathway is pyrimidine metabolism; UMP biosynthesis via de novo pathway; (S)-dihydroorotate from bicarbonate: step 2/3. Catalyzes the condensation of carbamoyl phosphate and aspartate to form carbamoyl aspartate and inorganic phosphate, the committed step in the de novo pyrimidine nucleotide biosynthesis pathway. The chain is Aspartate carbamoyltransferase catalytic subunit from Methanocorpusculum labreanum (strain ATCC 43576 / DSM 4855 / Z).